Reading from the N-terminus, the 416-residue chain is Formyl-CoA:oxalate CoA-transferase (416 aa).

CoA-binding positions include 17-18, R38, 72-75, 96-98, H104, and 137-140; these read QS, LNTK, NFH, and KAYE. The active-site Nucleophile is D169. Substrate is bound at residue 248-250; the sequence is GGQ. CoA is bound at residue 273–275; the sequence is QEQ.

This sequence belongs to the CoA-transferase III family. Frc subfamily. As to quaternary structure, homodimer.

It catalyses the reaction formyl-CoA + oxalate = oxalyl-CoA + formate. The protein operates within metabolic intermediate degradation; oxalate degradation; CO(2) and formate from oxalate: step 1/2. Its function is as follows. Involved in the catabolism of oxalate and in the adapatation to low pH via the induction of the oxalate-dependent acid tolerance response (ATR). Catalyzes the transfer of the CoA moiety from formyl-CoA to oxalate. The polypeptide is Formyl-CoA:oxalate CoA-transferase (Escherichia coli O81 (strain ED1a)).